The primary structure comprises 448 residues: Beclin-1 (448 aa).

Methionine 1 is modified (N-acetylmethionine). A phosphoserine mark is found at serine 14 and serine 29. The interval 47 to 66 is disordered; sequence TTAQAKPGETQEEEANSGEE. Phosphoserine; by AMPK occurs at positions 88, 91, and 94. The short motif at 106–125 is the BH3 element; that stretch reads TMENLSRRLKVTGDLFDIMS. The interaction with BCL2 and BCL2L1 isoform Bcl-X(L) stretch occupies residues 110–157; that stretch reads LSRRLKVTGDLFDIMSGQTDVDHPLCEECTDTLLDQLDTQLNVTENEC. Threonine 117 carries the post-translational modification Phosphothreonine; by DAPK1. Residues 140–268 are a coiled coil; sequence DTLLDQLDTQ…LDKLKKTNVF (129 aa). Residues 243 to 448 form an evolutionary conserved domain (ECD) region; sequence DELKSVENQV…AWVSSQFYNK (206 aa). Glycyl lysine isopeptide (Lys-Gly) (interchain with G-Cter in ubiquitin) cross-links involve residues lysine 400 and lysine 435. The interval 423–448 is required for membrane-association; sequence WTKALKFMLTNLKWGLAWVSSQFYNK.

This sequence belongs to the beclin family. As to quaternary structure, a homodimeric form is proposed to exist; this metastable form readily transits to ATG14- or UVRAG-containing complexes with BECN1:UVRAG being more stable than BECN1:ATG14. Component of the PI3K (PI3KC3/PI3K-III/class III phosphatidylinositol 3-kinase) complex whose core is composed of the catalytic subunit PIK3C3, the regulatory subunit PIK3R4 and BECN1, and associates with additional regulatory/auxiliary subunits to form alternative complex forms. Accepted alternative complex forms containing a fourth regulatory subunit in a mutually exclusive manner are PI3K complex I (PI3KC3-C1) containing ATG14, and PI3K complex II (PI3KC3-C2) containing UVRAG. PI3KC3-C1 displays a V-shaped architecture with PIK3R4 serving as a bridge between PIK3C3 and the ATG14:BECN1 subcomplex. Both, PI3KC3-C1 and PI3KC3-C2, can associate with further regulatory subunits, such as RUBCN, SH3GLB1/Bif-1 and AMBRA1. PI3KC3-C1 probably associates with PIK3CB. Forms a complex with PPP2CA and AMBRA1; AMBRA1 and BECN1 components of the complex regulate MYC stability via different pathways. Component of the complex, at least composed of LRPPRC, BECN1 and BCL2; the interactions prevent BECN1 from forming an autophagy-inducing complex with PIK3C3. Interacts with AMBRA1, GOPC, GRID2 and PIK3CB. Interacts with BCL2 and BCL2L1 isoform Bcl-X(L); the interaction inhibits BECN1 function in promoting autophagy by interfering with the formation of the PI3K complex. Interacts with cytosolic HMGB1; inhibits the interaction of BECN1 and BCL2 leading to promotion of autophagy. Interacts with USP10, USP13, VMP1, DAPK1. Interacts with the poly-Gln domain of ATXN3; the interaction causes deubiquitination at Lys-400 and stabilizes BECN1. Interacts with SLAMF1. Interacts with TRIM5; the interaction causes activation of BECN1 by causing its dissociation from its inhibitors BCL2 and TAB2. Interacts with active ULK1 (phosphorylated on 'Ser-317') and MEFV simultaneously. Interacts with TRIM50. Interacts with TRIM16. Interacts with WDR81 and WDR91; negatively regulates the PI3 kinase/PI3K activity associated with endosomal membranes. Interacts with LAPTM4B; competes with EGFR for LAPTM4B binding; regulates EGFR activity. Interacts with ATG14; this interaction is increased in the absence of TMEM39A. Interacts with WASHC1; preventing interaction with AMBRA1 and the DCX(AMBRA1) complex and subsequent ubiquitination. Interacts with TRIM17. Interacts with BCL2L10/BCL-B (via BH1 domain). Interacts with SH3BGRL. Interacts with Irgm1; enhancing BECN1-interacting partners and influencing the composition of the BECN1 complex. Interacts with ARMC3. Interacts with LRPPRC. (Microbial infection) Interacts with murine gammaherpesvirus 68 M11; the viral protein binds BECN1 with higher affinity than cellular BCL2. Phosphorylation at Thr-117 by DAPK1 reduces its interaction with BCL2 and BCL2L1 and promotes induction of autophagy. In response to autophagic stimuli, phosphorylated at serine residues by AMPK in an ATG14-dependent manner, and this phosphorylation is critical for maximally efficient autophagy. Post-translationally, polyubiquitinated by NEDD4, both with 'Lys-11'- and 'Lys-63'-linkages. 'Lys-11'-linked polyubiquitination leads to degradation and is enhanced when the stabilizing interaction partner VPS34 is depleted. Deubiquitinated by USP10 and USP13, leading to stabilize the PIK3C3/VPS34-containing complexes. Polyubiquitinated at Lys-400 with 'Lys-48'-linkages. 'Lys-48'-linked poyubiquitination of Lys-400 leads to degradation. Deubiquitinated by ATXN3, leading to stabilization. Ubiquitinated at Lys-435 via 'Lys-63'-linkage by the DCX(AMBRA1) complex, thereby increasing the association between BECN1 and PIK3C3 to promote PIK3C3 activity. 'Lys-48'-linked ubiquitination by RNF216 leads to proteasomal degradation and autophagy inhibition. In terms of processing, proteolytically processed by caspases including CASP8 and CASP3; the C-terminal fragments lack autophagy-inducing capacity and are proposed to induce apoptosis. Thus the cleavage is proposed to be an determinant to switch from autophagy to apoptosis pathways affecting cellular homeostasis including viral infections and survival of tumor cells.

The protein localises to the cytoplasm. It is found in the golgi apparatus. It localises to the trans-Golgi network membrane. Its subcellular location is the endosome membrane. The protein resides in the endoplasmic reticulum membrane. The protein localises to the mitochondrion membrane. It is found in the endosome. It localises to the cytoplasmic vesicle. Its subcellular location is the autophagosome. The protein resides in the mitochondrion. The protein localises to the nucleus. Plays a central role in autophagy. Acts as a core subunit of different PI3K complex forms that mediate formation of phosphatidylinositol 3-phosphate and are believed to play a role in multiple membrane trafficking pathways: PI3KC3-C1 is involved in initiation of autophagosomes and PI3KC3-C2 in maturation of autophagosomes and endocytosis. Involved in regulation of degradative endocytic trafficking and required for the abscission step in cytokinesis, probably in the context of PI3KC3-C2. Essential for the formation of PI3KC3-C2 but not PI3KC3-C1 PI3K complex forms. Involved in endocytosis including endosome formation in neuronal cells. May play a role in antiviral host defense. In terms of biological role, beclin-1-C 35 kDa localized to mitochondria can promote apoptosis; it induces the mitochondrial translocation of BAX and the release of proapoptotic factors. The chain is Beclin-1 (Becn1) from Mus musculus (Mouse).